Consider the following 64-residue polypeptide: Delta-buthitoxin-Hj2a (64 aa).

Cystine bridges form between Cys-12–Cys-63, Cys-16–Cys-36, Cys-22–Cys-46, and Cys-26–Cys-48. Arg-64 carries the post-translational modification Arginine amide.

Belongs to the long (4 C-C) scorpion toxin superfamily. Sodium channel inhibitor family. Alpha subfamily. As to expression, expressed by the venom gland.

The protein resides in the secreted. In terms of biological role, this non-amidated recombinant toxin slows fast inactivation on Nav1.1/SCN1A (EC(50)=52.8 nM), Nav1.4/SN4A (EC(50)=32 nM), Nav1.5/SCN5A (EC(50)=116.7 nM), Nav1.6/SCN8A (EC(50)=46.3 nM), and Nav1.7/SCN9A (EC(50)=147.4 nM) voltage-gated sodium channels. On Nav1.1/SCN1A channel, acts as an agonist by inducing a shift in both the voltage dependence of channel inactivation (alpha-toxin activity) and activation (beta-toxin activity). The protein is Delta-buthitoxin-Hj2a of Hottentotta judaicus (Black scorpion).